Reading from the N-terminus, the 337-residue chain is Ketol-acid reductoisomerase (NADP(+)) (337 aa).

The KARI N-terminal Rossmann domain maps to 3–183 (IDVFYDDDAD…GGGRAGVIPT (181 aa)). Residues 26–29 (YGSQ), arginine 49, serine 52, serine 54, and 84–87 (DTSQ) contribute to the NADP(+) site. Histidine 109 is an active-site residue. Position 135 (glycine 135) interacts with NADP(+). In terms of domain architecture, KARI C-terminal knotted spans 184 to 329 (TFEAETVTDL…EKLRDLMSWV (146 aa)). The Mg(2+) site is built by aspartate 192, glutamate 196, glutamate 228, and glutamate 232. Serine 253 serves as a coordination point for substrate.

It belongs to the ketol-acid reductoisomerase family. Requires Mg(2+) as cofactor.

It catalyses the reaction (2R)-2,3-dihydroxy-3-methylbutanoate + NADP(+) = (2S)-2-acetolactate + NADPH + H(+). The enzyme catalyses (2R,3R)-2,3-dihydroxy-3-methylpentanoate + NADP(+) = (S)-2-ethyl-2-hydroxy-3-oxobutanoate + NADPH + H(+). It participates in amino-acid biosynthesis; L-isoleucine biosynthesis; L-isoleucine from 2-oxobutanoate: step 2/4. It functions in the pathway amino-acid biosynthesis; L-valine biosynthesis; L-valine from pyruvate: step 2/4. Functionally, involved in the biosynthesis of branched-chain amino acids (BCAA). Catalyzes an alkyl-migration followed by a ketol-acid reduction of (S)-2-acetolactate (S2AL) to yield (R)-2,3-dihydroxy-isovalerate. In the isomerase reaction, S2AL is rearranged via a Mg-dependent methyl migration to produce 3-hydroxy-3-methyl-2-ketobutyrate (HMKB). In the reductase reaction, this 2-ketoacid undergoes a metal-dependent reduction by NADPH to yield (R)-2,3-dihydroxy-isovalerate. The protein is Ketol-acid reductoisomerase (NADP(+)) of Corynebacterium urealyticum (strain ATCC 43042 / DSM 7109).